A 54-amino-acid polypeptide reads, in one-letter code: Large ribosomal subunit protein eL37 (54 aa).

Zn(2+) contacts are provided by C20, C23, C35, and C38. The C4-type zinc finger occupies C20–C38.

It belongs to the eukaryotic ribosomal protein eL37 family. Zn(2+) serves as cofactor.

Binds to the 23S rRNA. This Thermoplasma acidophilum (strain ATCC 25905 / DSM 1728 / JCM 9062 / NBRC 15155 / AMRC-C165) protein is Large ribosomal subunit protein eL37 (rpl37e).